The primary structure comprises 378 residues: Erythronate-4-phosphate dehydrogenase (378 aa).

Substrate is bound by residues serine 45 and threonine 66. Residues aspartate 146 and threonine 175 each coordinate NAD(+). Residue arginine 208 is part of the active site. Aspartate 232 is a binding site for NAD(+). Glutamate 237 is a catalytic residue. Histidine 254 functions as the Proton donor in the catalytic mechanism. Glycine 257 lines the NAD(+) pocket. Position 258 (tyrosine 258) interacts with substrate.

Belongs to the D-isomer specific 2-hydroxyacid dehydrogenase family. PdxB subfamily. Homodimer.

It is found in the cytoplasm. The catalysed reaction is 4-phospho-D-erythronate + NAD(+) = (R)-3-hydroxy-2-oxo-4-phosphooxybutanoate + NADH + H(+). It functions in the pathway cofactor biosynthesis; pyridoxine 5'-phosphate biosynthesis; pyridoxine 5'-phosphate from D-erythrose 4-phosphate: step 2/5. Its function is as follows. Catalyzes the oxidation of erythronate-4-phosphate to 3-hydroxy-2-oxo-4-phosphonooxybutanoate. This chain is Erythronate-4-phosphate dehydrogenase, found in Salmonella agona (strain SL483).